An 862-amino-acid chain; its full sequence is Leucine--tRNA ligase (862 aa).

The 'HIGH' region motif lies at Pro49 to His59. The short motif at Lys625–Ser629 is the 'KMSKS' region element. Lys628 is an ATP binding site.

This sequence belongs to the class-I aminoacyl-tRNA synthetase family.

It is found in the cytoplasm. The enzyme catalyses tRNA(Leu) + L-leucine + ATP = L-leucyl-tRNA(Leu) + AMP + diphosphate. This is Leucine--tRNA ligase from Paramagnetospirillum magneticum (strain ATCC 700264 / AMB-1) (Magnetospirillum magneticum).